Reading from the N-terminus, the 704-residue chain is Rabphilin-3A (704 aa).

Residues 1–12 are compositionally biased toward polar residues; the sequence is MTDTVFSSSSSR. A disordered region spans residues 1–52; the sequence is MTDTVFSSSSSRWMCPSDRPLQSNDKEQLQTGWSVHPSGQPDRQRKQEELTD. The RabBD domain maps to 44–161; sequence QRKQEELTDE…KRSGAWFFKG (118 aa). The FYVE-type zinc-finger motif lies at 92–149; it reads GDGVNRCILCGEQLGMLGSACVVCEDCKKNVCTKCGVETSNNRPHPVWLCKICIEQRE. 8 residues coordinate Zn(2+): Cys98, Cys101, Cys115, Cys118, Cys123, Cys126, Cys141, and Cys144. Positions 167–398 are disordered; it reads LPQPMPIKKN…EEEANSYDSD (232 aa). A compositionally biased stretch (basic and acidic residues) spans 205 to 214; it reads TRGDTEDRRG. Omega-N-methylarginine is present on Arg229. Phosphoserine is present on Ser277. A compositionally biased stretch (low complexity) spans 279 to 290; it reads QASRPAPASMQS. Residues 291–310 are compositionally biased toward pro residues; the sequence is PAPPQPGQPGPPGGSRPSPG. Residues 366–380 are compositionally biased toward low complexity; the sequence is QASAAAPQPVVASAR. A compositionally biased stretch (acidic residues) spans 385–398; that stretch reads PEEDEEEANSYDSD. A C2 1 domain is found at 402–524; it reads TLGALEFSLL…KPNQRKNFNI (123 aa). 14 residues coordinate Ca(2+): Met432, Asp433, Asp439, Asp494, Glu495, Asp496, Glu502, Glu549, Asp591, Asp597, Asp651, Tyr652, Asp653, and Asp659. The C2 2 domain maps to 560–693; the sequence is ERGKILVSLM…NKDKKIERWH (134 aa). Ser702 and Ser703 each carry phosphoserine.

As to quaternary structure, interacts with RAB3B, RAB3C, RAB3D, RAB8A, RAB27A and RAB27B. Interacts with RAB3A; this interaction recruits RPH3A to synaptic vesicules. Interacts (via C2B domain) with SNAP25. Interacts with deubiquitinating enzyme CAND1; this interaction results in the deubiquitination of RPH3A. Interacts with GRIN2A and DLG4; this ternary complex regulates NMDA receptor composition at postsynaptic membranes. Interacts with SNCA. The cofactor is Ca(2+). Ubiquitinated. Deubiquitinated by CAND1 to prevent its degradation. In terms of tissue distribution, specifically expressed in brain.

It is found in the cytoplasmic vesicle. The protein localises to the secretory vesicle. The protein resides in the synaptic vesicle membrane. It localises to the cell projection. Its subcellular location is the dendritic spine. It is found in the postsynaptic cell membrane. The protein localises to the membrane. In terms of biological role, plays an essential role in docking and fusion steps of regulated exocytosis. At the presynaptic level, RPH3A is recruited by RAB3A to the synaptic vesicle membrane in a GTP-dependent manner where it modulates synaptic vesicle trafficking and calcium-triggered neurotransmitter release. In the post-synaptic compartment, forms a ternary complex with GRIN2A and DLG4 and regulates NMDA receptor stability. Also plays a role in the exocytosis of arginine vasopressin hormone. The chain is Rabphilin-3A (RPH3A) from Bos taurus (Bovine).